A 304-amino-acid chain; its full sequence is MENVKNFVKLFVEYLQIEKNYSQYTIVNYVDSIEEFETFLRVQGINGFEEAAYQDTRIFLTEAYEKGLSRRTISKKISALRSFYKFLMREKLIEENPFQLVHLPKQEKRIPKFLYQKELEELFEVSDISQPAGMRDQALLELLYATGMRVSECCSITINDVDLFMDTVLVHGKGKKQRYIPFGSYAREALKVYMNSGRQCLLMKAKEPHDLLFVNQRGGPLTARGIRHILSGLVQKASSTLHIHPHMLRHTFATHLLNEGADLRSVQELLGHSNLSSTQIYTHVSKEMLRNTYMSHHPRAFKKN.

Residues 2–88 (ENVKNFVKLF…ALRSFYKFLM (87 aa)) form the Core-binding (CB) domain. The 186-residue stretch at 109–294 (RIPKFLYQKE…SKEMLRNTYM (186 aa)) folds into the Tyr recombinase domain. Catalysis depends on residues arginine 149, lysine 173, histidine 246, arginine 249, and histidine 272. The active-site O-(3'-phospho-DNA)-tyrosine intermediate is the tyrosine 281.

This sequence belongs to the 'phage' integrase family. XerC subfamily. Forms a cyclic heterotetrameric complex composed of two molecules of XerC and two molecules of XerD.

It localises to the cytoplasm. Its function is as follows. Site-specific tyrosine recombinase, which acts by catalyzing the cutting and rejoining of the recombining DNA molecules. The XerC-XerD complex is essential to convert dimers of the bacterial chromosome into monomers to permit their segregation at cell division. It also contributes to the segregational stability of plasmids. This chain is Tyrosine recombinase XerC, found in Bacillus subtilis (strain 168).